The primary structure comprises 93 residues: Chromosomal protein MC1 (93 aa).

The segment at 1–43 (SNTRNFVLRDEEGNEHGVFTGKQPRQAALKAANRGDGTKSNPD) is disordered.

In terms of biological role, protects DNA against thermal denaturation and modulates transcription. The sequence is that of Chromosomal protein MC1 from Methanosarcina barkeri.